The primary structure comprises 243 residues: 1-(5-phosphoribosyl)-5-[(5-phosphoribosylamino)methylideneamino] imidazole-4-carboxamide isomerase (243 aa).

Asp-8 acts as the Proton acceptor in catalysis. The Proton donor role is filled by Asp-130.

Belongs to the HisA/HisF family.

It is found in the cytoplasm. It carries out the reaction 1-(5-phospho-beta-D-ribosyl)-5-[(5-phospho-beta-D-ribosylamino)methylideneamino]imidazole-4-carboxamide = 5-[(5-phospho-1-deoxy-D-ribulos-1-ylimino)methylamino]-1-(5-phospho-beta-D-ribosyl)imidazole-4-carboxamide. The protein operates within amino-acid biosynthesis; L-histidine biosynthesis; L-histidine from 5-phospho-alpha-D-ribose 1-diphosphate: step 4/9. The polypeptide is 1-(5-phosphoribosyl)-5-[(5-phosphoribosylamino)methylideneamino] imidazole-4-carboxamide isomerase (Saccharophagus degradans (strain 2-40 / ATCC 43961 / DSM 17024)).